A 125-amino-acid chain; its full sequence is uncharacterized protein (125 aa).

The next 4 helical transmembrane spans lie at 9 to 29 (IANA…TLTG), 33 to 53 (GEKT…NMVV), 56 to 76 (IVQV…TLVV), and 100 to 120 (FWTA…LNAF).

It is found in the cell membrane. This is an uncharacterized protein from Streptomyces coelicolor (strain ATCC BAA-471 / A3(2) / M145).